The following is a 550-amino-acid chain: Dihydroxy-acid dehydratase (550 aa).

Aspartate 78 serves as a coordination point for Mg(2+). Cysteine 119 lines the [2Fe-2S] cluster pocket. Mg(2+) contacts are provided by aspartate 120 and lysine 121. Lysine 121 is modified (N6-carboxylysine). Residue cysteine 191 coordinates [2Fe-2S] cluster. Glutamate 440 is a binding site for Mg(2+). The active-site Proton acceptor is serine 466.

The protein belongs to the IlvD/Edd family. In terms of assembly, homodimer. [2Fe-2S] cluster is required as a cofactor. Requires Mg(2+) as cofactor.

It carries out the reaction (2R)-2,3-dihydroxy-3-methylbutanoate = 3-methyl-2-oxobutanoate + H2O. The enzyme catalyses (2R,3R)-2,3-dihydroxy-3-methylpentanoate = (S)-3-methyl-2-oxopentanoate + H2O. The protein operates within amino-acid biosynthesis; L-isoleucine biosynthesis; L-isoleucine from 2-oxobutanoate: step 3/4. It participates in amino-acid biosynthesis; L-valine biosynthesis; L-valine from pyruvate: step 3/4. Functionally, functions in the biosynthesis of branched-chain amino acids. Catalyzes the dehydration of (2R,3R)-2,3-dihydroxy-3-methylpentanoate (2,3-dihydroxy-3-methylvalerate) into 2-oxo-3-methylpentanoate (2-oxo-3-methylvalerate) and of (2R)-2,3-dihydroxy-3-methylbutanoate (2,3-dihydroxyisovalerate) into 2-oxo-3-methylbutanoate (2-oxoisovalerate), the penultimate precursor to L-isoleucine and L-valine, respectively. This is Dihydroxy-acid dehydratase from Methanococcus maripaludis (strain DSM 14266 / JCM 13030 / NBRC 101832 / S2 / LL).